The primary structure comprises 676 residues: ATP-dependent RNA helicase dbp-9 (676 aa).

Positions 1–97 (MAKRKLNETD…SEKDDADLTF (97 aa)) are disordered. Residues 70–90 (QQLKDEQKQQDEKDEKKQSEK) show a composition bias toward basic and acidic residues. The Q motif signature appears at 95 to 123 (LTFSDLGLDPRLVQAVAKQSFEKPTLVQR). The region spanning 126-304 (IPLALAGQDV…KGFFCRNPTM (179 aa)) is the Helicase ATP-binding domain. 139-146 (AKTGSGKT) lines the ATP pocket. Positions 251 to 254 (DEAD) match the DEAD box motif. One can recognise a Helicase C-terminal domain in the interval 317–541 (KLTQFYVKCG…PYNFNKDQME (225 aa)). Basic and acidic residues predominate over residues 410–432 (EDEKTEEKKEEQGEKKEGDEKKN). 2 disordered regions span residues 410–444 (EDEK…RRDQ) and 633–676 (FKKQ…RVRK). Over residues 642 to 663 (TRGKKGAKGGKGGHGKYKKGPG) the composition is skewed to basic residues.

Belongs to the DEAD box helicase family. DDX56/DBP9 subfamily.

It is found in the nucleus. The protein localises to the nucleolus. The catalysed reaction is ATP + H2O = ADP + phosphate + H(+). Functionally, ATP-binding RNA helicase involved in the biogenesis of 60S ribosomal subunits and is required for the normal formation of 25S and 5.8S rRNAs. This chain is ATP-dependent RNA helicase dbp-9 (dbp-9), found in Neurospora crassa (strain ATCC 24698 / 74-OR23-1A / CBS 708.71 / DSM 1257 / FGSC 987).